A 152-amino-acid chain; its full sequence is Small ribosomal subunit protein uS17A (152 aa).

It belongs to the universal ribosomal protein uS17 family. Component of the small ribosomal subunit (SSU). Mature yeast ribosomes consist of a small (40S) and a large (60S) subunit. The 40S small subunit contains 1 molecule of ribosomal RNA (18S rRNA) and at least 33 different proteins. The large 60S subunit contains 3 rRNA molecules (25S, 5.8S and 5S rRNA) and at least 46 different proteins.

It is found in the cytoplasm. Its subcellular location is the nucleus. In terms of biological role, component of the ribosome, a large ribonucleoprotein complex responsible for the synthesis of proteins in the cell. The small ribosomal subunit (SSU) binds messenger RNAs (mRNAs) and translates the encoded message by selecting cognate aminoacyl-transfer RNA (tRNA) molecules. The large subunit (LSU) contains the ribosomal catalytic site termed the peptidyl transferase center (PTC), which catalyzes the formation of peptide bonds, thereby polymerizing the amino acids delivered by tRNAs into a polypeptide chain. The nascent polypeptides leave the ribosome through a tunnel in the LSU and interact with protein factors that function in enzymatic processing, targeting, and the membrane insertion of nascent chains at the exit of the ribosomal tunnel. This Schizosaccharomyces pombe (strain 972 / ATCC 24843) (Fission yeast) protein is Small ribosomal subunit protein uS17A (rps1101).